A 777-amino-acid chain; its full sequence is DNA ligase (777 aa).

Residues 35-39 (DAEYD), 84-85 (SL), and E116 contribute to the NAD(+) site. K118 functions as the N6-AMP-lysine intermediate in the catalytic mechanism. Positions 139, 176, 293, and 317 each coordinate NAD(+). The Zn(2+) site is built by C411, C414, C429, and C435. The BRCT domain maps to 691 to 777 (MESQPLEGQT…NQHGIDPGAL (87 aa)).

Belongs to the NAD-dependent DNA ligase family. LigA subfamily. The cofactor is Mg(2+). Mn(2+) serves as cofactor.

The enzyme catalyses NAD(+) + (deoxyribonucleotide)n-3'-hydroxyl + 5'-phospho-(deoxyribonucleotide)m = (deoxyribonucleotide)n+m + AMP + beta-nicotinamide D-nucleotide.. In terms of biological role, DNA ligase that catalyzes the formation of phosphodiester linkages between 5'-phosphoryl and 3'-hydroxyl groups in double-stranded DNA using NAD as a coenzyme and as the energy source for the reaction. It is essential for DNA replication and repair of damaged DNA. This Alcanivorax borkumensis (strain ATCC 700651 / DSM 11573 / NCIMB 13689 / SK2) protein is DNA ligase.